Consider the following 838-residue polypeptide: Axin-2 (838 aa).

Residues 1–75 (MSSAVLVTLL…EGRASPDSPL (75 aa)) are disordered. Positions 21 to 30 (APRPPVPGEE) match the Tankyrase-binding motif motif. Residues 42–55 (KVQSTKPMPVSSNA) show a composition bias toward polar residues. The span at 56–69 (RRNEDGLGEPEGRA) shows a compositional bias: basic and acidic residues. Positions 81–200 (SLHSLLGDQD…LTSDIYLEYV (120 aa)) constitute an RGS domain. Disordered regions lie at residues 300-333 (SELS…KKQL), 398-435 (IRED…EEDP), 450-483 (PGCQ…LLPT), 568-682 (GSRG…AMPP), and 712-744 (VASQ…DHKE). Positions 303–318 (SSDALTDDSMSMTDSS) are enriched in low complexity. Residues 327 to 413 (MGSKKQLQRE…KEGSEQALSS (87 aa)) are interaction with GSK3B. The tract at residues 413–476 (SRDGAPVQHP…PDHHHHHHQQ (64 aa)) is interaction with beta-catenin. A compositionally biased stretch (polar residues) spans 727-737 (AGPTSFSNPSL). Residues 756 to 838 (ASELIVTYFF…RILGKVERID (83 aa)) enclose the DIX domain.

As to quaternary structure, interacts with SMAD7 and RNF111. Interacts with ANKRD6. Interacts with glycogen synthase kinase-3 beta (GSK3B) and beta-catenin. The interaction between axin and beta-catenin occurs via the armadillo repeats contained in beta-catenin. Interacts with SIAH1. Interacts with SIAH2. ADP-ribosylated by tankyrase TNKS and TNKS2. Poly-ADP-ribosylated protein is recognized by RNF146, followed by ubiquitination and subsequent activation of the Wnt signaling pathway. Post-translationally, ubiquitinated by RNF146 when poly-ADP-ribosylated, leading to its degradation and subsequent activation of the Wnt signaling pathway. Deubiquitinated by USP34, deubiquitinated downstream of beta-catenin stabilization step: deubiquitination is important Wnt signaling to positively regulate beta-catenin (CTNBB1)-mediated transcription. In terms of processing, probably phosphorylated by GSK3B and dephosphorylated by PP2A. As to expression, expressed in lung and thymus.

It is found in the cytoplasm. Inhibitor of the Wnt signaling pathway. Down-regulates beta-catenin. Probably facilitate the phosphorylation of beta-catenin and APC by GSK3B. The chain is Axin-2 (Axin2) from Rattus norvegicus (Rat).